The following is a 264-amino-acid chain: Thymidylate synthase (264 aa).

Residue Arg-21 coordinates dUMP. His-51 contributes to the (6R)-5,10-methylene-5,6,7,8-tetrahydrofolate binding site. Residue 126–127 participates in dUMP binding; the sequence is RR. The Nucleophile role is filled by Cys-146. Residues 166–169, Asn-177, and 207–209 contribute to the dUMP site; these read RSAD and HIY. Asp-169 is a binding site for (6R)-5,10-methylene-5,6,7,8-tetrahydrofolate. Ala-263 contributes to the (6R)-5,10-methylene-5,6,7,8-tetrahydrofolate binding site.

Belongs to the thymidylate synthase family. Bacterial-type ThyA subfamily. As to quaternary structure, homodimer.

Its subcellular location is the cytoplasm. The enzyme catalyses dUMP + (6R)-5,10-methylene-5,6,7,8-tetrahydrofolate = 7,8-dihydrofolate + dTMP. It functions in the pathway pyrimidine metabolism; dTTP biosynthesis. Functionally, catalyzes the reductive methylation of 2'-deoxyuridine-5'-monophosphate (dUMP) to 2'-deoxythymidine-5'-monophosphate (dTMP) while utilizing 5,10-methylenetetrahydrofolate (mTHF) as the methyl donor and reductant in the reaction, yielding dihydrofolate (DHF) as a by-product. This enzymatic reaction provides an intracellular de novo source of dTMP, an essential precursor for DNA biosynthesis. In Bacteroides thetaiotaomicron (strain ATCC 29148 / DSM 2079 / JCM 5827 / CCUG 10774 / NCTC 10582 / VPI-5482 / E50), this protein is Thymidylate synthase.